The following is a 313-amino-acid chain: Aspartate carbamoyltransferase catalytic subunit (313 aa).

Residues Arg-51 and Thr-52 each contribute to the carbamoyl phosphate site. Lys-80 is an L-aspartate binding site. Carbamoyl phosphate-binding residues include Arg-101, His-129, and Gln-132. Residues Arg-162 and Arg-224 each coordinate L-aspartate. Residues Leu-263 and Pro-264 each coordinate carbamoyl phosphate.

Belongs to the aspartate/ornithine carbamoyltransferase superfamily. ATCase family. As to quaternary structure, heterododecamer (2C3:3R2) of six catalytic PyrB chains organized as two trimers (C3), and six regulatory PyrI chains organized as three dimers (R2).

It carries out the reaction carbamoyl phosphate + L-aspartate = N-carbamoyl-L-aspartate + phosphate + H(+). The protein operates within pyrimidine metabolism; UMP biosynthesis via de novo pathway; (S)-dihydroorotate from bicarbonate: step 2/3. Catalyzes the condensation of carbamoyl phosphate and aspartate to form carbamoyl aspartate and inorganic phosphate, the committed step in the de novo pyrimidine nucleotide biosynthesis pathway. The protein is Aspartate carbamoyltransferase catalytic subunit of Phocaeicola vulgatus (strain ATCC 8482 / DSM 1447 / JCM 5826 / CCUG 4940 / NBRC 14291 / NCTC 11154) (Bacteroides vulgatus).